The chain runs to 359 residues: Serine hydrolase-like protein DDB_G0286239 (359 aa).

Residues 38–289 (LALHGWLDNA…VPGSHHFHME (252 aa)) form the AB hydrolase-1 domain. Ser111 is a catalytic residue. The disordered stretch occupies residues 310–359 (FTPSSTTQQQQQQQQSAENKKGDNHNQIAEQDLSTSNTSSPIISKPKPNL). Over residues 334–351 (HNQIAEQDLSTSNTSSPI) the composition is skewed to polar residues.

Belongs to the AB hydrolase superfamily.

Its function is as follows. Probable serine hydrolase. In Dictyostelium discoideum (Social amoeba), this protein is Serine hydrolase-like protein DDB_G0286239.